The chain runs to 80 residues: Large ribosomal subunit protein bL31B (80 aa).

Belongs to the bacterial ribosomal protein bL31 family. Type B subfamily. In terms of assembly, part of the 50S ribosomal subunit.

The chain is Large ribosomal subunit protein bL31B from Xylella fastidiosa (strain M23).